The primary structure comprises 79 residues: HLILASALICALVVCTFAEEQVNVPFLPDEREVKCIGWQEYCRGNLPCCDDCVMCECNIMGQNCRCNHPRITSECGSRR.

The N-terminal stretch at 1 to 18 (HLILASALICALVVCTFA) is a signal peptide. Residues 19–31 (EEQVNVPFLPDER) constitute a propeptide that is removed on maturation. 5 cysteine pairs are disulfide-bonded: Cys-35–Cys-49, Cys-42–Cys-55, Cys-48–Cys-66, Cys-52–Cys-75, and Cys-57–Cys-64. A propeptide spanning residues 78-79 (RR) is cleaved from the precursor.

The protein belongs to the neurotoxin 02 (plectoxin) family. 02 (plectoxin) subfamily. In terms of tissue distribution, expressed by the venom gland.

Its subcellular location is the secreted. In terms of biological role, potent toxin that may paralyze and/or kill insect pests such as H.virescens (lepidoptera), S.exigua (beet armyworm) and M.sexta (tobacco hornworm). The chain is U1-plectoxin-Pt1c from Plectreurys tristis (Spider).